The chain runs to 101 residues: Large ribosomal subunit protein bL20 (101 aa).

This sequence belongs to the bacterial ribosomal protein bL20 family.

Binds directly to 23S ribosomal RNA and is necessary for the in vitro assembly process of the 50S ribosomal subunit. It is not involved in the protein synthesizing functions of that subunit. This chain is Large ribosomal subunit protein bL20 (rplT), found in Carsonella ruddii (strain PV).